The chain runs to 273 residues: Tryptase (273 aa).

Positions 1-18 (MLKLLLLTLPLLSSLVHA) are cleaved as a signal peptide. The propeptide at 19-28 (APSLAMPREG) is activation peptide. The Peptidase S1 domain maps to 29-270 (IVGGQEASGN…YLDWIYRYVP (242 aa)). N49 carries N-linked (GlcNAc...) asparagine glycosylation. The cysteines at positions 57 and 73 are disulfide-linked. Catalysis depends on charge relay system residues H72 and D119. 3 disulfides stabilise this stretch: C153/C228, C186/C209, and C218/C246. S222 serves as the catalytic Charge relay system.

This sequence belongs to the peptidase S1 family. Tryptase subfamily. As to quaternary structure, homotetramer. In terms of processing, glycosylated. In terms of tissue distribution, mast cells.

The protein localises to the secreted. It carries out the reaction Preferential cleavage: Arg-|-Xaa, Lys-|-Xaa, but with more restricted specificity than trypsin.. Tryptase is the major neutral protease present in mast cells and is secreted upon the coupled activation-degranulation response of this cell type. May play a role in innate immunity. In Rattus norvegicus (Rat), this protein is Tryptase (Tpsab1).